Consider the following 329-residue polypeptide: Biotin synthase (329 aa).

The region spanning 36-260 (GEIQLCTLLS…VAVARITMPK (225 aa)) is the Radical SAM core domain. Positions 51, 55, and 58 each coordinate [4Fe-4S] cluster. 4 residues coordinate [2Fe-2S] cluster: Cys95, Cys126, Cys186, and Arg264.

Belongs to the radical SAM superfamily. Biotin synthase family. In terms of assembly, homodimer. It depends on [4Fe-4S] cluster as a cofactor. Requires [2Fe-2S] cluster as cofactor.

The catalysed reaction is (4R,5S)-dethiobiotin + (sulfur carrier)-SH + 2 reduced [2Fe-2S]-[ferredoxin] + 2 S-adenosyl-L-methionine = (sulfur carrier)-H + biotin + 2 5'-deoxyadenosine + 2 L-methionine + 2 oxidized [2Fe-2S]-[ferredoxin]. The protein operates within cofactor biosynthesis; biotin biosynthesis; biotin from 7,8-diaminononanoate: step 2/2. Catalyzes the conversion of dethiobiotin (DTB) to biotin by the insertion of a sulfur atom into dethiobiotin via a radical-based mechanism. The chain is Biotin synthase from Sphingopyxis alaskensis (strain DSM 13593 / LMG 18877 / RB2256) (Sphingomonas alaskensis).